The chain runs to 63 residues: Large ribosomal subunit protein uL29 (63 aa).

The protein belongs to the universal ribosomal protein uL29 family.

The protein is Large ribosomal subunit protein uL29 of Colwellia psychrerythraea (strain 34H / ATCC BAA-681) (Vibrio psychroerythus).